We begin with the raw amino-acid sequence, 612 residues long: Dihydroxy-acid dehydratase (612 aa).

Asp81 lines the Mg(2+) pocket. Cys122 provides a ligand contact to [2Fe-2S] cluster. Residues Asp123 and Lys124 each contribute to the Mg(2+) site. Position 124 is an N6-carboxylysine (Lys124). Cys195 provides a ligand contact to [2Fe-2S] cluster. Mg(2+) is bound at residue Glu491. Catalysis depends on Ser517, which acts as the Proton acceptor.

Belongs to the IlvD/Edd family. As to quaternary structure, homodimer. [2Fe-2S] cluster serves as cofactor. Requires Mg(2+) as cofactor.

It catalyses the reaction (2R)-2,3-dihydroxy-3-methylbutanoate = 3-methyl-2-oxobutanoate + H2O. The enzyme catalyses (2R,3R)-2,3-dihydroxy-3-methylpentanoate = (S)-3-methyl-2-oxopentanoate + H2O. It functions in the pathway amino-acid biosynthesis; L-isoleucine biosynthesis; L-isoleucine from 2-oxobutanoate: step 3/4. Its pathway is amino-acid biosynthesis; L-valine biosynthesis; L-valine from pyruvate: step 3/4. Functions in the biosynthesis of branched-chain amino acids. Catalyzes the dehydration of (2R,3R)-2,3-dihydroxy-3-methylpentanoate (2,3-dihydroxy-3-methylvalerate) into 2-oxo-3-methylpentanoate (2-oxo-3-methylvalerate) and of (2R)-2,3-dihydroxy-3-methylbutanoate (2,3-dihydroxyisovalerate) into 2-oxo-3-methylbutanoate (2-oxoisovalerate), the penultimate precursor to L-isoleucine and L-valine, respectively. In Bartonella henselae (strain ATCC 49882 / DSM 28221 / CCUG 30454 / Houston 1) (Rochalimaea henselae), this protein is Dihydroxy-acid dehydratase.